The chain runs to 76 residues: Alpha/kappa-conotoxin-like pl14.3 (76 aa).

The N-terminal stretch at 1–27 (MPSVRSVACCCLLWMMLSVQLVTPGSP) is a signal peptide. Residues 28-39 (ATAQLSGQRTAR) constitute a propeptide that is removed on maturation. Cystine bridges form between Cys46–Cys61 and Cys50–Cys63. At Asp64 the chain carries Aspartic acid 1-amide. Positions 65 to 76 (GKRDVVSSSMAV) are excised as a propeptide.

It belongs to the conotoxin J superfamily. Expressed by the venom duct.

The protein resides in the secreted. In terms of biological role, highly inhibits both nicotinic acetylcholine receptors (neuronal (alpha-3/beta-4) and muscular (alpha-1/beta-1/epsilon/delta) subtypes) and the voltage-gated potassium channel Kv1.6/KCNA6 subtype. This chain is Alpha/kappa-conotoxin-like pl14.3, found in Conus planorbis (Planorbis cone).